Consider the following 204-residue polypeptide: Ras-related protein RABG1 (204 aa).

12 to 19 lines the GTP pocket; sequence GDSGVGKT. The Effector region signature appears at 34-42; that stretch reads HNSTIYVDL. Residues 60-64, 122-125, and 155-156 contribute to the GTP site; these read DTAGQ, NKTD, and SA. S-geranylgeranyl cysteine attachment occurs at residues Cys-202 and Cys-204. At Cys-204 the chain carries Cysteine methyl ester.

The protein belongs to the small GTPase superfamily. Rab family.

It localises to the cell membrane. Its function is as follows. Intracellular vesicle trafficking and protein transport. In Arabidopsis thaliana (Mouse-ear cress), this protein is Ras-related protein RABG1 (RABG1).